Consider the following 586-residue polypeptide: Phosphomethylpyrimidine synthase (586 aa).

2 disordered regions span residues 38–59 and 92–114; these read IELS…TSGP and GREI…VFPQ. Basic and acidic residues predominate over residues 92–102; it reads GREIKPEDDGV. Substrate contacts are provided by residues Asn-193, Met-222, Tyr-251, His-287, 307–309, 348–351, and Glu-387; these read SRG and DGLR. Residue His-391 coordinates Zn(2+). Substrate is bound at residue Tyr-414. Position 455 (His-455) interacts with Zn(2+). [4Fe-4S] cluster contacts are provided by Cys-535, Cys-538, and Cys-543.

The protein belongs to the ThiC family. The cofactor is [4Fe-4S] cluster.

It catalyses the reaction 5-amino-1-(5-phospho-beta-D-ribosyl)imidazole + S-adenosyl-L-methionine = 4-amino-2-methyl-5-(phosphooxymethyl)pyrimidine + CO + 5'-deoxyadenosine + formate + L-methionine + 3 H(+). Its pathway is cofactor biosynthesis; thiamine diphosphate biosynthesis. In terms of biological role, catalyzes the synthesis of the hydroxymethylpyrimidine phosphate (HMP-P) moiety of thiamine from aminoimidazole ribotide (AIR) in a radical S-adenosyl-L-methionine (SAM)-dependent reaction. This is Phosphomethylpyrimidine synthase from Bacillus cytotoxicus (strain DSM 22905 / CIP 110041 / 391-98 / NVH 391-98).